The sequence spans 570 residues: Urease subunit alpha (570 aa).

The Urease domain maps to 135 to 570 (GGLDIHVHFN…ELPLAQRYHL (436 aa)). Residues His-140, His-142, and Lys-219 each coordinate Ni(2+). Lys-219 is modified (N6-carboxylysine). Residue His-221 participates in substrate binding. The Ni(2+) site is built by His-248 and His-274. Catalysis depends on His-322, which acts as the Proton donor. Asp-362 contacts Ni(2+).

This sequence belongs to the metallo-dependent hydrolases superfamily. Urease alpha subunit family. In terms of assembly, heterotrimer of UreA (gamma), UreB (beta) and UreC (alpha) subunits. Three heterotrimers associate to form the active enzyme. Ni cation is required as a cofactor. Carboxylation allows a single lysine to coordinate two nickel ions.

The protein resides in the cytoplasm. The catalysed reaction is urea + 2 H2O + H(+) = hydrogencarbonate + 2 NH4(+). The protein operates within nitrogen metabolism; urea degradation; CO(2) and NH(3) from urea (urease route): step 1/1. This chain is Urease subunit alpha, found in Natronomonas pharaonis (strain ATCC 35678 / DSM 2160 / CIP 103997 / JCM 8858 / NBRC 14720 / NCIMB 2260 / Gabara) (Halobacterium pharaonis).